An 807-amino-acid chain; its full sequence is Ecotropic viral integration site 5 ortholog (807 aa).

The tract at residues 1 to 31 (MTLTTTTTASSAESQAKMDVKGGALPGEENL) is disordered. Thr33 is subject to Phosphothreonine. Phosphoserine occurs at positions 58 and 64. The 185-residue stretch at 116 to 300 (GIPHHFRAIV…RIMDVFLSEG (185 aa)) folds into the Rab-GAP TBC domain. Coiled-coil stretches lie at residues 352–463 (SIKL…ENNV), 494–583 (CLLE…ENQR), and 627–772 (REME…RGKF).

Interacts with Rab11.

It is found in the cytoplasm. It localises to the endosome. Functions as a GTPase-activating protein (GAP). During border cell migration in the ovary, acts as a GAP for Rab11 and is necessary for the maintenance of active receptor tyrosine kinases at the leading edge. The polypeptide is Ecotropic viral integration site 5 ortholog (Evi5) (Drosophila melanogaster (Fruit fly)).